Reading from the N-terminus, the 106-residue chain is Iron-sulfur cluster assembly protein CyaY (106 aa).

Belongs to the frataxin family.

In terms of biological role, involved in iron-sulfur (Fe-S) cluster assembly. May act as a regulator of Fe-S biogenesis. The chain is Iron-sulfur cluster assembly protein CyaY from Citrobacter koseri (strain ATCC BAA-895 / CDC 4225-83 / SGSC4696).